The sequence spans 248 residues: Ubiquinone/menaquinone biosynthesis C-methyltransferase UbiE (248 aa).

Residues S68 and D92 each coordinate S-adenosyl-L-methionine.

Belongs to the class I-like SAM-binding methyltransferase superfamily. MenG/UbiE family.

It catalyses the reaction a 2-demethylmenaquinol + S-adenosyl-L-methionine = a menaquinol + S-adenosyl-L-homocysteine + H(+). The catalysed reaction is a 2-methoxy-6-(all-trans-polyprenyl)benzene-1,4-diol + S-adenosyl-L-methionine = a 5-methoxy-2-methyl-3-(all-trans-polyprenyl)benzene-1,4-diol + S-adenosyl-L-homocysteine + H(+). Its pathway is quinol/quinone metabolism; menaquinone biosynthesis; menaquinol from 1,4-dihydroxy-2-naphthoate: step 2/2. It participates in cofactor biosynthesis; ubiquinone biosynthesis. Its function is as follows. Methyltransferase required for the conversion of demethylmenaquinol (DMKH2) to menaquinol (MKH2) and the conversion of 2-polyprenyl-6-methoxy-1,4-benzoquinol (DDMQH2) to 2-polyprenyl-3-methyl-6-methoxy-1,4-benzoquinol (DMQH2). In Rickettsia massiliae (strain Mtu5), this protein is Ubiquinone/menaquinone biosynthesis C-methyltransferase UbiE.